Here is a 220-residue protein sequence, read N- to C-terminus: Peptide methionine sulfoxide reductase MsrA (220 aa).

The active site involves C52.

The protein belongs to the MsrA Met sulfoxide reductase family.

The catalysed reaction is L-methionyl-[protein] + [thioredoxin]-disulfide + H2O = L-methionyl-(S)-S-oxide-[protein] + [thioredoxin]-dithiol. It carries out the reaction [thioredoxin]-disulfide + L-methionine + H2O = L-methionine (S)-S-oxide + [thioredoxin]-dithiol. Its function is as follows. Has an important function as a repair enzyme for proteins that have been inactivated by oxidation. Catalyzes the reversible oxidation-reduction of methionine sulfoxide in proteins to methionine. The sequence is that of Peptide methionine sulfoxide reductase MsrA from Corynebacterium diphtheriae (strain ATCC 700971 / NCTC 13129 / Biotype gravis).